Consider the following 251-residue polypeptide: Imidazole glycerol phosphate synthase subunit HisF (251 aa).

Catalysis depends on residues Asp-11 and Asp-130.

The protein belongs to the HisA/HisF family. Heterodimer of HisH and HisF.

It is found in the cytoplasm. It carries out the reaction 5-[(5-phospho-1-deoxy-D-ribulos-1-ylimino)methylamino]-1-(5-phospho-beta-D-ribosyl)imidazole-4-carboxamide + L-glutamine = D-erythro-1-(imidazol-4-yl)glycerol 3-phosphate + 5-amino-1-(5-phospho-beta-D-ribosyl)imidazole-4-carboxamide + L-glutamate + H(+). It participates in amino-acid biosynthesis; L-histidine biosynthesis; L-histidine from 5-phospho-alpha-D-ribose 1-diphosphate: step 5/9. IGPS catalyzes the conversion of PRFAR and glutamine to IGP, AICAR and glutamate. The HisF subunit catalyzes the cyclization activity that produces IGP and AICAR from PRFAR using the ammonia provided by the HisH subunit. In Chlorobaculum parvum (strain DSM 263 / NCIMB 8327) (Chlorobium vibrioforme subsp. thiosulfatophilum), this protein is Imidazole glycerol phosphate synthase subunit HisF.